A 1756-amino-acid chain; its full sequence is Protein TIC 214 (1756 aa).

6 helical membrane passes run 18–38 (VSGP…LPFG), 54–74 (GYGI…FLSM), 79–99 (IYAA…YMFF), 128–148 (LFMD…NPVL), 163–183 (ISFM…LTIF), and 210–230 (FSLL…LPFL). A disordered region spans residues 1469 to 1504 (KNKQVEDGQDKNGQVEDQDGQDQDGQVEDQQTDGKK). The segment covering 1471–1482 (KQVEDGQDKNGQ) has biased composition (basic and acidic residues). The segment covering 1484 to 1499 (EDQDGQDQDGQVEDQQ) has biased composition (acidic residues).

Belongs to the TIC214 family. As to quaternary structure, part of the Tic complex.

It is found in the plastid. It localises to the chloroplast inner membrane. Functionally, involved in protein precursor import into chloroplasts. May be part of an intermediate translocation complex acting as a protein-conducting channel at the inner envelope. This is Protein TIC 214 from Pinus thunbergii (Japanese black pine).